Reading from the N-terminus, the 1010-residue chain is Sodium/potassium-transporting ATPase subunit alpha-3 (1010 aa).

Positions 1–21 (MGDKDDRFPKKKKGGTKDMDA) are disordered. Residues 1–74 (MGDKDDRFPK…NALTPPPTTP (74 aa)) lie on the Cytoplasmic side of the membrane. The interaction with phosphoinositide-3 kinase stretch occupies residues 69 to 71 (PPP). Residues 75–95 (EWVKFCRQLFGGFSILLWTGA) traverse the membrane as a helical segment. Residues 96-118 (ILCFLAYAIQAATEDEPAGDNLY) lie on the Extracellular side of the membrane. The chain crosses the membrane as a helical span at residues 119 to 139 (LGIVLTAVVVITGCFSYFQEA). Residues 140–275 (KSSKIMESFK…TGKTPIAVEI (136 aa)) are Cytoplasmic-facing. Residues 201-216 (DNSSLTGESEPQSRSP) are compositionally biased toward polar residues. Positions 201-221 (DNSSLTGESEPQSRSPDCTHD) are disordered. A helical transmembrane segment spans residues 276–295 (EHFIHIITGVAVFLGVTFFI). The Extracellular portion of the chain corresponds to 296–307 (LAIILGYTWLKA). A helical transmembrane segment spans residues 308-325 (VIFLIGIIVANVPEGLLA). Residues 326–759 (TVTVCLTLTA…EEGRLIFDNL (434 aa)) lie on the Cytoplasmic side of the membrane. Asp363 serves as the catalytic 4-aspartylphosphate intermediate. 2 residues coordinate Mg(2+): Asp704 and Asp708. The chain crosses the membrane as a helical span at residues 760-779 (KKSIAYTLTSNIPEITPFLF). Residues 780-789 (FIIVNIPLAL) lie on the Extracellular side of the membrane. Residues 790–810 (GTITILCIDLGTDMGSAISLA) form a helical membrane-spanning segment. The Cytoplasmic segment spans residues 811–830 (YETAESDIMKRQPRNPCRDK). Residues 831–853 (LVNERLISIAYGQIGMIQALGGF) form a helical membrane-spanning segment. The Extracellular portion of the chain corresponds to 854-905 (FSYFVILAENGFLPSQLVGIRLNWDDRSLNDLEDSYGQQWTYEQRKIVEFTC). Residues 906-925 (HTAFFVSIVVVQWADLIICK) form a helical membrane-spanning segment. Residues 926–938 (TRRNSVFQQGMKN) are Cytoplasmic-facing. A Phosphoserine; by PKA modification is found at Ser930. The chain crosses the membrane as a helical span at residues 939–957 (KILIFGLFEETALAAFLSY). Over 958 to 972 (CPGMDVALRMYPLKP) the chain is Extracellular. Residues 973-993 (TWWFWAFPYSFLIFVYDEARK) traverse the membrane as a helical segment. Over 994–1010 (LILCRNPGGWVEKETYY) the chain is Cytoplasmic.

Belongs to the cation transport ATPase (P-type) (TC 3.A.3) family. Type IIC subfamily. The sodium/potassium-transporting ATPase is composed of a catalytic alpha subunit, an auxiliary non-catalytic beta subunit and an additional regulatory subunit.

It localises to the cell membrane. The catalysed reaction is K(+)(out) + Na(+)(in) + ATP + H2O = K(+)(in) + Na(+)(out) + ADP + phosphate + H(+). Its function is as follows. This is the catalytic component of the active enzyme, which catalyzes the hydrolysis of ATP coupled with the exchange of sodium and potassium ions across the plasma membrane. This action creates the electrochemical gradient of sodium and potassium ions, providing the energy for active transport of various nutrients. This Oreochromis mossambicus (Mozambique tilapia) protein is Sodium/potassium-transporting ATPase subunit alpha-3 (atp1a3).